The chain runs to 168 residues: Peptidoglycan-associated lipoprotein (168 aa).

Residues 1-24 (MRRIQSIARSPIAIALFMSLAVAG) form the signal peptide. C25 is lipidated: N-palmitoyl cysteine. C25 carries S-diacylglycerol cysteine lipidation. An OmpA-like domain is found at 51 to 167 (QDFTVNVGDR…RAVTVLNGAG (117 aa)).

It belongs to the Pal lipoprotein family. In terms of assembly, the Tol-Pal system is composed of five core proteins: the inner membrane proteins TolA, TolQ and TolR, the periplasmic protein TolB and the outer membrane protein Pal. They form a network linking the inner and outer membranes and the peptidoglycan layer. Post-translationally, the N-terminus is blocked.

It is found in the cell outer membrane. Its function is as follows. Part of the Tol-Pal system, which plays a role in outer membrane invagination during cell division and is important for maintaining outer membrane integrity. The polypeptide is Peptidoglycan-associated lipoprotein (Brucella abortus biovar 1 (strain 9-941)).